Here is a 209-residue protein sequence, read N- to C-terminus: MRNPVDTAMALVPMVVEQTNRGERSYDIYSRLLKERIIFLTGAVEDHMATLVCAQLLFLEAENPKKEIALYINSPGGVVTAGMAIYDTMQFIKPAVSTLCIGQAASMGSLLLAAGHKDMRFATPNSRIMVHQPSGGFQGQASDIERHARDILKMKRRLNEVYVKHTGRTYEEVEKTLDRDHFMDADEAQGWGVIDKVLTSRLEMEGEQA.

The Nucleophile role is filled by Ser106. The active site involves His131.

Belongs to the peptidase S14 family. Fourteen ClpP subunits assemble into 2 heptameric rings which stack back to back to give a disk-like structure with a central cavity, resembling the structure of eukaryotic proteasomes.

The protein localises to the cytoplasm. The catalysed reaction is Hydrolysis of proteins to small peptides in the presence of ATP and magnesium. alpha-casein is the usual test substrate. In the absence of ATP, only oligopeptides shorter than five residues are hydrolyzed (such as succinyl-Leu-Tyr-|-NHMec, and Leu-Tyr-Leu-|-Tyr-Trp, in which cleavage of the -Tyr-|-Leu- and -Tyr-|-Trp bonds also occurs).. Its function is as follows. Cleaves peptides in various proteins in a process that requires ATP hydrolysis. Has a chymotrypsin-like activity. Plays a major role in the degradation of misfolded proteins. The sequence is that of ATP-dependent Clp protease proteolytic subunit 2 from Rhizobium etli (strain ATCC 51251 / DSM 11541 / JCM 21823 / NBRC 15573 / CFN 42).